Consider the following 234-residue polypeptide: uncharacterized protein (234 aa).

68–70 provides a ligand contact to L-glutamine; it reads GES. The active-site Nucleophile is cysteine 101. L-glutamine-binding positions include arginine 131 and 167-168; that span reads IR. Active-site charge relay system residues include histidine 208 and glutamate 210.

This sequence belongs to the glutaminase PdxT/SNO family.

The protein resides in the cytoplasm. It catalyses the reaction L-glutamine + H2O = L-glutamate + NH4(+). This is an uncharacterized protein from Schizosaccharomyces pombe (strain 972 / ATCC 24843) (Fission yeast).